A 278-amino-acid chain; its full sequence is 4-deoxy-L-threo-5-hexosulose-uronate ketol-isomerase (278 aa).

Residues His-196, His-198, Glu-203, and His-245 each contribute to the Zn(2+) site.

It belongs to the KduI family. Zn(2+) serves as cofactor.

It catalyses the reaction 5-dehydro-4-deoxy-D-glucuronate = 3-deoxy-D-glycero-2,5-hexodiulosonate. It participates in glycan metabolism; pectin degradation; 2-dehydro-3-deoxy-D-gluconate from pectin: step 4/5. In terms of biological role, catalyzes the isomerization of 5-dehydro-4-deoxy-D-glucuronate to 3-deoxy-D-glycero-2,5-hexodiulosonate. This Yersinia pseudotuberculosis serotype O:1b (strain IP 31758) protein is 4-deoxy-L-threo-5-hexosulose-uronate ketol-isomerase.